A 244-amino-acid polypeptide reads, in one-letter code: Venom nerve growth factor 1 (244 aa).

A signal peptide spans 1–18; sequence MSMLCYTLIIAFLIGIWA. Positions 19-125 are excised as a propeptide; it reads APKSEDNVPL…TLNRNIRAKR (107 aa). Residues 47–66 show a composition bias toward basic and acidic residues; that stretch reads GLKTSRNTDQRHPAPKKAED. The disordered stretch occupies residues 47 to 67; it reads GLKTSRNTDQRHPAPKKAEDQ. 3 cysteine pairs are disulfide-bonded: Cys-139-Cys-205, Cys-181-Cys-233, and Cys-193-Cys-235.

Belongs to the NGF-beta family. As to quaternary structure, homodimer; non-covalently linked. In terms of tissue distribution, expressed by the venom gland.

The protein resides in the secreted. In terms of biological role, nerve growth factor is important for the development and maintenance of the sympathetic and sensory nervous systems. It stimulates division and differentiation of sympathetic and embryonic sensory neurons as well as basal forebrain cholinergic neurons in the brain. Its relevance in the snake venom is not clear. However, it has been shown to inhibit metalloproteinase-dependent proteolysis of platelet glycoprotein Ib alpha, suggesting a metalloproteinase inhibition to prevent metalloprotease autodigestion and/or protection against prey proteases. Binds a lipid between the two protein chains in the homodimer. The lipid-bound form promotes histamine relase from mouse mast cells, contrary to the lipid-free form. This chain is Venom nerve growth factor 1, found in Notechis scutatus scutatus (Mainland tiger snake).